A 117-amino-acid polypeptide reads, in one-letter code: MRVKTGPITRKRRKKWLKLAKGYFGHKSIGFKVAKQQVVKSWTYAFRDRKQVKRHFRRLWIARINAATRAQGVSYSLFINGLKKSNIQINRKMLSEIAIHQPKVFDKILTKVKSHLK.

This sequence belongs to the bacterial ribosomal protein bL20 family.

Its function is as follows. Binds directly to 23S ribosomal RNA and is necessary for the in vitro assembly process of the 50S ribosomal subunit. It is not involved in the protein synthesizing functions of that subunit. The sequence is that of Large ribosomal subunit protein bL20 from Mycoplasma mobile (strain ATCC 43663 / 163K / NCTC 11711) (Mesomycoplasma mobile).